A 467-amino-acid chain; its full sequence is Fumarate hydratase class II (467 aa).

Substrate-binding positions include 98–100, R126, 129–132, 139–141, and T187; these read SGT, HPND, and SSN. The active-site Proton donor/acceptor is H188. S318 is a catalytic residue. Substrate contacts are provided by residues S319 and 324–326; that span reads KVN.

It belongs to the class-II fumarase/aspartase family. Fumarase subfamily. In terms of assembly, homotetramer.

It localises to the cytoplasm. The catalysed reaction is (S)-malate = fumarate + H2O. It functions in the pathway carbohydrate metabolism; tricarboxylic acid cycle; (S)-malate from fumarate: step 1/1. In terms of biological role, involved in the TCA cycle. Catalyzes the stereospecific interconversion of fumarate to L-malate. The polypeptide is Fumarate hydratase class II (Escherichia coli O6:H1 (strain CFT073 / ATCC 700928 / UPEC)).